A 340-amino-acid chain; its full sequence is Phenylalanine--tRNA ligase alpha subunit (340 aa).

Residue Glu254 coordinates Mg(2+).

This sequence belongs to the class-II aminoacyl-tRNA synthetase family. Phe-tRNA synthetase alpha subunit type 1 subfamily. Tetramer of two alpha and two beta subunits. Requires Mg(2+) as cofactor.

The protein resides in the cytoplasm. It carries out the reaction tRNA(Phe) + L-phenylalanine + ATP = L-phenylalanyl-tRNA(Phe) + AMP + diphosphate + H(+). This chain is Phenylalanine--tRNA ligase alpha subunit, found in Chloroherpeton thalassium (strain ATCC 35110 / GB-78).